A 530-amino-acid polypeptide reads, in one-letter code: Pancreatic secretory granule membrane major glycoprotein GP2 (530 aa).

The N-terminal stretch at 1–21 (MVACDLLWLAAASCLLTLVFP) is a signal peptide. Residue N33 is glycosylated (N-linked (GlcNAc...) asparagine). 11 disulfides stabilise this stretch: C41–C52, C56–C150, C78–C168, C100–C138, C106–C173, C131–C139, C183–C193, C187–C202, C204–C234, C222–C313, and C254–C277. The tract at residues 54–74 (DPCQNHTVLNDPSRSTENTVS) is D10C. N-linked (GlcNAc...) asparagine glycans are attached at residues N58 and N127. Positions 179–223 (APKKCEIACRPEEECVFQNNSWTCVCRQDLNVSDTLSLQPLLDCG) constitute an EGF-like domain. Residues N197 and N209 are each glycosylated (N-linked (GlcNAc...) asparagine). The segment at 221 to 314 (DCGANEIKVK…FLVNVNFQCA (94 aa)) is ZP-N. The 257-residue stretch at 221–477 (DCGANEIKVK…PSCSTSRLRS (257 aa)) folds into the ZP domain. N-linked (GlcNAc...) asparagine glycosylation is found at N284 and N320. Residues 315 to 338 (YPLDMNVSLQTALQPIVSSLNVDV) form a flexible ZP-N/ZP-C linker region. The tract at residues 339–350 (GGAGEFTVTMAL) is internal hydrophobic patch (IHP). The ZP-C stretch occupies residues 339-477 (GGAGEFTVTM…PSCSTSRLRS (139 aa)). Cystine bridges form between C394–C454, C415–C470, and C459–C466. The segment at 484–492 (LTRVLDIGP) is external hydrophobic patch (EHP). The GPI-anchor amidated asparagine moiety is linked to residue N505. Residues 506–530 (GTPRNTGFLLAWPTFFLPVFLAWLF) constitute a propeptide, removed in mature form.

Interacts with SYCN. Interacts with bacterial adhesin fimH. Post-translationally, N-glycosylated. In terms of tissue distribution, expressed in pancreas.

Its subcellular location is the zymogen granule membrane. The protein localises to the secreted. It localises to the cell membrane. The protein resides in the apical cell membrane. It is found in the membrane raft. Its subcellular location is the endosome. Functionally, functions as an intestinal M-cell transcytotic receptor specific of type-I-piliated bacteria that participates in the mucosal immune response toward these bacteria. At the apical membrane of M-cells it binds fimH, a protein of the bacteria type I pilus tip. Internalizes bound bacteria, like E.coli and S.typhimurium, from the lumen of the intestine and delivers them, through M-cells, to the underlying organized lymphoid follicles where they are captured by antigen-presenting dendritic cells to elicit a mucosal immune response. This Rattus norvegicus (Rat) protein is Pancreatic secretory granule membrane major glycoprotein GP2.